A 363-amino-acid chain; its full sequence is Des-methyl DIF-1 methyltransferase A (363 aa).

The S-adenosyl-L-methionine site is built by glycine 195, aspartate 221, aspartate 250, leucine 251, and lysine 266. Histidine 270 (proton acceptor) is an active-site residue.

This sequence belongs to the class I-like SAM-binding methyltransferase superfamily. Cation-independent O-methyltransferase family. COMT subfamily.

The catalysed reaction is (3,5-dichloro-2,4,6-trihydroxyphenyl)hexan-1-one + S-adenosyl-L-methionine = 1-(3,5-dichloro-2,6-dihydroxy-4-methoxyphenyl)hexan-1-one + S-adenosyl-L-homocysteine + H(+). In terms of biological role, O-methyltransferase; part of the gene cluster that mediates the biosynthesis of DIF-1 (Differentiation Inducing Factor-1), a signal molecule involved in the differentiation of pstO (prestalk-O) cells. The three-step process begins with the formation of (2,4,6-trihydroxyphenyl)-1-hexan-1-one (THPH) by the polyketide synthase StlB. THPH is then dichlorinated by the flavin-dependent halogenase ChlA. The last step of DIF-1 biosynthesis is the O-methylation of dichloro-THPH (or des-methyl-DIF-1) by the methyltransferase DmtA to yield DIF-1. The sequence is that of Des-methyl DIF-1 methyltransferase A from Dictyostelium discoideum (Social amoeba).